A 122-amino-acid polypeptide reads, in one-letter code: Large ribosomal subunit protein uL14 (122 aa).

This sequence belongs to the universal ribosomal protein uL14 family. As to quaternary structure, part of the 50S ribosomal subunit. Forms a cluster with proteins L3 and L19. In the 70S ribosome, L14 and L19 interact and together make contacts with the 16S rRNA in bridges B5 and B8.

Functionally, binds to 23S rRNA. Forms part of two intersubunit bridges in the 70S ribosome. The chain is Large ribosomal subunit protein uL14 from Lactobacillus helveticus (strain DPC 4571).